A 292-amino-acid chain; its full sequence is 33 kDa chaperonin (292 aa).

2 disulfide bridges follow: Cys-230-Cys-232 and Cys-263-Cys-266.

It belongs to the HSP33 family. Post-translationally, under oxidizing conditions two disulfide bonds are formed involving the reactive cysteines. Under reducing conditions zinc is bound to the reactive cysteines and the protein is inactive.

The protein localises to the cytoplasm. Its function is as follows. Redox regulated molecular chaperone. Protects both thermally unfolding and oxidatively damaged proteins from irreversible aggregation. Plays an important role in the bacterial defense system toward oxidative stress. The sequence is that of 33 kDa chaperonin from Shigella dysenteriae serotype 1 (strain Sd197).